The sequence spans 203 residues: Pro-FMRFamide-related neuropeptide VF (203 aa).

The N-terminal stretch at 1-26 (MEIISSKRFILLTLATSSFLTSNTLC) is a signal peptide. The propeptide occupies 27–57 (SDELMMPHFHSKEGYGKYYQLRGIPKGVKER). Position 94 is a phenylalanine amide (Phe94). Residues 97-106 (NIEDRRSPRA) constitute a propeptide that is removed on maturation. Residue Phe125 is modified to Phenylalanine amide. Residues 128–203 (TTARRITKTL…QPVLQGAMKL (76 aa)) constitute a propeptide that is removed on maturation. Residues 161–186 (HQEIQSPGQEQPRKRVFTETDDAERK) are disordered. Positions 171–186 (QPRKRVFTETDDAERK) are enriched in basic and acidic residues.

Belongs to the FARP (FMRFamide related peptide) family. As to expression, isoform 1 is expressed at high levels in the hypothalamus and eye. Isoform 2 is specifically expressed in a region between the dorsomedial hypothalamic and ventromedial hypothalamic nuclei.

The protein localises to the secreted. Its function is as follows. Efficiently inhibits forskolin-induced production of cAMP. Acts as a potent negative regulator of gonadotropin synthesis and secretion. Induces secretion of prolactin. Functionally, efficiently inhibits forskolin-induced production of cAMP. Blocks morphine-induced analgesia. The protein is Pro-FMRFamide-related neuropeptide VF (Npvf) of Rattus norvegicus (Rat).